The following is a 441-amino-acid chain: ATP-dependent protease ATPase subunit HslU (441 aa).

ATP is bound by residues isoleucine 18, 60 to 65 (GVGKTE), aspartate 254, glutamate 319, and arginine 391.

This sequence belongs to the ClpX chaperone family. HslU subfamily. As to quaternary structure, a double ring-shaped homohexamer of HslV is capped on each side by a ring-shaped HslU homohexamer. The assembly of the HslU/HslV complex is dependent on binding of ATP.

The protein resides in the cytoplasm. Functionally, ATPase subunit of a proteasome-like degradation complex; this subunit has chaperone activity. The binding of ATP and its subsequent hydrolysis by HslU are essential for unfolding of protein substrates subsequently hydrolyzed by HslV. HslU recognizes the N-terminal part of its protein substrates and unfolds these before they are guided to HslV for hydrolysis. In Shewanella sediminis (strain HAW-EB3), this protein is ATP-dependent protease ATPase subunit HslU.